A 159-amino-acid polypeptide reads, in one-letter code: Phosphopantetheine adenylyltransferase (159 aa).

Residue T9 participates in substrate binding. ATP is bound by residues 9 to 10 (TF) and H17. 3 residues coordinate substrate: K41, L73, and R87. Residues 88 to 90 (GLR), E98, and 123 to 129 (YAFLSST) each bind ATP.

This sequence belongs to the bacterial CoaD family. In terms of assembly, homohexamer. Mg(2+) is required as a cofactor.

Its subcellular location is the cytoplasm. The enzyme catalyses (R)-4'-phosphopantetheine + ATP + H(+) = 3'-dephospho-CoA + diphosphate. It participates in cofactor biosynthesis; coenzyme A biosynthesis; CoA from (R)-pantothenate: step 4/5. In terms of biological role, reversibly transfers an adenylyl group from ATP to 4'-phosphopantetheine, yielding dephospho-CoA (dPCoA) and pyrophosphate. The protein is Phosphopantetheine adenylyltransferase of Vibrio campbellii (strain ATCC BAA-1116).